A 402-amino-acid chain; its full sequence is Endoglucanase 1 (402 aa).

The residue at position 1 (Gln1) is a Pyrrolidone carboxylic acid. Disulfide bonds link Cys18-Cys24, Cys51-Cys73, and Cys63-Cys69. Asn89 is a glycosylation site (N-linked (GlcNAc...) asparagine). 6 cysteine pairs are disulfide-bonded: Cys140–Cys365, Cys172–Cys195, Cys176–Cys194, Cys215–Cys234, Cys223–Cys228, and Cys239–Cys315. Glu197 (nucleophile) is an active-site residue. The active-site Proton donor is the Glu202. Asn247 is a glycosylation site (N-linked (GlcNAc...) asparagine).

Belongs to the glycosyl hydrolase 7 (cellulase C) family. As to quaternary structure, monomer.

It is found in the secreted. The enzyme catalyses Endohydrolysis of (1-&gt;4)-beta-D-glucosidic linkages in cellulose, lichenin and cereal beta-D-glucans.. In terms of biological role, the biological conversion of cellulose to glucose generally requires three types of hydrolytic enzymes: (1) Endoglucanases which cut internal beta-1,4-glucosidic bonds; (2) Exocellobiohydrolases that cut the disaccharide cellobiose from the non-reducing end of the cellulose polymer chain; (3) Beta-1,4-glucosidases which hydrolyze the cellobiose and other short cello-oligosaccharides to glucose. The sequence is that of Endoglucanase 1 (CEL7B) from Humicola insolens (Soft-rot fungus).